Consider the following 418-residue polypeptide: Protein MAEA homolog (418 aa).

The 33-residue stretch at 141–173 (NNTKLKRILVDYMLRMSYFETATKLSESSNIMD) folds into the LisH domain. Positions 179–236 (IFREAKKVIDALKNREVASALTWCADNKTRLKKSKSKFEFQLRLQEFIELVRVDTAES) constitute a CTLH domain. The RING-Gid-type zinc-finger motif lies at 330–403 (CTKEDPLSQE…NGGKITCPRT (74 aa)).

Interacts with RANBPM.

It localises to the cytoplasm. This is Protein MAEA homolog from Arabidopsis thaliana (Mouse-ear cress).